Consider the following 339-residue polypeptide: Ketol-acid reductoisomerase (NADP(+)) (339 aa).

The KARI N-terminal Rossmann domain maps to 1 to 182; it reads MRVYYDRDAD…GGGRAGIIET (182 aa). Residues 24–27, Arg48, Ser51, Ser53, and 83–86 contribute to the NADP(+) site; these read YGSQ and DELQ. Residue His108 is part of the active site. Residue Gly134 coordinates NADP(+). The KARI C-terminal knotted domain maps to 183–328; the sequence is TFREECETDL…ARLRDMMPWI (146 aa). Residues Asp191, Glu195, Glu227, and Glu231 each contribute to the Mg(2+) site. Ser252 is a binding site for substrate.

Belongs to the ketol-acid reductoisomerase family. It depends on Mg(2+) as a cofactor.

It catalyses the reaction (2R)-2,3-dihydroxy-3-methylbutanoate + NADP(+) = (2S)-2-acetolactate + NADPH + H(+). The catalysed reaction is (2R,3R)-2,3-dihydroxy-3-methylpentanoate + NADP(+) = (S)-2-ethyl-2-hydroxy-3-oxobutanoate + NADPH + H(+). Its pathway is amino-acid biosynthesis; L-isoleucine biosynthesis; L-isoleucine from 2-oxobutanoate: step 2/4. It participates in amino-acid biosynthesis; L-valine biosynthesis; L-valine from pyruvate: step 2/4. Its function is as follows. Involved in the biosynthesis of branched-chain amino acids (BCAA). Catalyzes an alkyl-migration followed by a ketol-acid reduction of (S)-2-acetolactate (S2AL) to yield (R)-2,3-dihydroxy-isovalerate. In the isomerase reaction, S2AL is rearranged via a Mg-dependent methyl migration to produce 3-hydroxy-3-methyl-2-ketobutyrate (HMKB). In the reductase reaction, this 2-ketoacid undergoes a metal-dependent reduction by NADPH to yield (R)-2,3-dihydroxy-isovalerate. The protein is Ketol-acid reductoisomerase (NADP(+)) of Nitrobacter winogradskyi (strain ATCC 25391 / DSM 10237 / CIP 104748 / NCIMB 11846 / Nb-255).